Reading from the N-terminus, the 143-residue chain is Large ribosomal subunit protein uL13c (143 aa).

It belongs to the universal ribosomal protein uL13 family. In terms of assembly, part of the 50S ribosomal subunit.

The protein localises to the plastid. It is found in the chloroplast. The polypeptide is Large ribosomal subunit protein uL13c (Guillardia theta (Cryptophyte)).